The chain runs to 171 residues: Cytochrome c-type biogenesis protein CcmE (171 aa).

The Cytoplasmic segment spans residues 1–7; the sequence is MNRKQKR. The chain crosses the membrane as a helical; Signal-anchor for type II membrane protein span at residues 8 to 28; it reads LAVIAGGMGFIAAAVLLVMFA. Residues 29 to 171 lie on the Periplasmic side of the membrane; that stretch reads FSQSVAYFYM…NPGEEAKATQ (143 aa). Heme contacts are provided by H124 and Y128. Positions 132–171 are disordered; it reads DVADRLKQQGLWKEGQGGQESPGKEGQGQENPGEEAKATQ.

It belongs to the CcmE/CycJ family.

The protein resides in the cell inner membrane. In terms of biological role, heme chaperone required for the biogenesis of c-type cytochromes. Transiently binds heme delivered by CcmC and transfers the heme to apo-cytochromes in a process facilitated by CcmF and CcmH. This chain is Cytochrome c-type biogenesis protein CcmE, found in Rhizobium leguminosarum bv. trifolii (strain WSM2304).